We begin with the raw amino-acid sequence, 115 residues long: Large ribosomal subunit protein P2 (115 aa).

An N-acetylmethionine modification is found at methionine 1. 2 positions are modified to phosphoserine: serine 17 and serine 19. Residue lysine 21 is modified to N6-acetyllysine; alternate. At lysine 21 the chain carries N6-succinyllysine; alternate. The segment covering 76–90 has biased composition (low complexity); the sequence is APGSAAPAAGSAPAA. Positions 76–115 are disordered; sequence APGSAAPAAGSAPAAAEEKKDEKKEESEESDDDMGFGLFD. Phosphoserine occurs at positions 79 and 86. The segment covering 91 to 101 has biased composition (basic and acidic residues); that stretch reads AEEKKDEKKEE. A phosphoserine mark is found at serine 102 and serine 105.

The protein belongs to the eukaryotic ribosomal protein P1/P2 family. Heterodimer with RPLP1 at the lateral ribosomal stalk of the large ribosomal subunit.

Functionally, plays an important role in the elongation step of protein synthesis. The chain is Large ribosomal subunit protein P2 (Rplp2) from Mus musculus (Mouse).